A 281-amino-acid chain; its full sequence is Large ribosomal subunit protein mL46 (281 aa).

The transit peptide at Met1–Ser19 directs the protein to the mitochondrion. Residues Arg106–Asp118 are compositionally biased toward basic and acidic residues. The disordered stretch occupies residues Arg106–Ile141. Positions Asp119 to Lys129 are enriched in polar residues.

Belongs to the mitochondrion-specific ribosomal protein mL46 family. Component of the mitochondrial large ribosomal subunit (mt-LSU). Mature yeast 74S mitochondrial ribosomes consist of a small (37S) and a large (54S) subunit. The 37S small subunit contains a 15S ribosomal RNA (15S mt-rRNA) and 34 different proteins. The 54S large subunit contains a 21S rRNA (21S mt-rRNA) and 46 different proteins.

The protein resides in the mitochondrion. Its function is as follows. Component of the mitochondrial ribosome (mitoribosome), a dedicated translation machinery responsible for the synthesis of mitochondrial genome-encoded proteins, including at least some of the essential transmembrane subunits of the mitochondrial respiratory chain. The mitoribosomes are attached to the mitochondrial inner membrane and translation products are cotranslationally integrated into the membrane. The polypeptide is Large ribosomal subunit protein mL46 (MRPL17) (Saccharomyces cerevisiae (strain ATCC 204508 / S288c) (Baker's yeast)).